A 360-amino-acid polypeptide reads, in one-letter code: Glutamate--cysteine ligase (360 aa).

This sequence belongs to the glutamate--cysteine ligase type 2 family. YbdK subfamily.

The catalysed reaction is L-cysteine + L-glutamate + ATP = gamma-L-glutamyl-L-cysteine + ADP + phosphate + H(+). Its function is as follows. Catalyzes the synthesis of gamma-glutamylcysteine (gamma-GC), the main low-molecular-weight thiol compound instead of glutathione in halophilic archaea. The polypeptide is Glutamate--cysteine ligase (Halobacterium salinarum (strain ATCC 29341 / DSM 671 / R1)).